The primary structure comprises 203 residues: ER membrane protein complex subunit 8/9 homolog (203 aa).

One can recognise an MPN domain in the interval 4–140; it reads YKVSERAYAK…IQVFNCPGDS (137 aa).

Belongs to the EMC8/EMC9 family. Component of the ER membrane protein complex (EMC).

The protein localises to the endoplasmic reticulum membrane. Its function is as follows. Part of the endoplasmic reticulum membrane protein complex (EMC) that enables the energy-independent insertion into endoplasmic reticulum membranes of newly synthesized multi-pass membrane proteins like rhodopsins. This chain is ER membrane protein complex subunit 8/9 homolog, found in Drosophila melanogaster (Fruit fly).